Here is a 520-residue protein sequence, read N- to C-terminus: Glutamate--cysteine ligase (520 aa).

Belongs to the glutamate--cysteine ligase type 1 family. Type 1 subfamily.

It carries out the reaction L-cysteine + L-glutamate + ATP = gamma-L-glutamyl-L-cysteine + ADP + phosphate + H(+). The protein operates within sulfur metabolism; glutathione biosynthesis; glutathione from L-cysteine and L-glutamate: step 1/2. This Serratia proteamaculans (strain 568) protein is Glutamate--cysteine ligase.